Consider the following 119-residue polypeptide: Large ribosomal subunit protein bL19 (119 aa).

It belongs to the bacterial ribosomal protein bL19 family.

Its function is as follows. This protein is located at the 30S-50S ribosomal subunit interface and may play a role in the structure and function of the aminoacyl-tRNA binding site. The polypeptide is Large ribosomal subunit protein bL19 (Petrotoga mobilis (strain DSM 10674 / SJ95)).